The sequence spans 282 residues: Undecaprenyl-diphosphatase (282 aa).

6 consecutive transmembrane segments (helical) span residues 90–110 (YWLG…GLVC), 121–141 (LWVV…AEYV), 165–185 (LALI…LFLG), 194–214 (FGFL…IPDA), 228–248 (QLLV…SWLL), and 256–276 (LYWF…LLAV).

It belongs to the UppP family.

Its subcellular location is the cell membrane. The catalysed reaction is di-trans,octa-cis-undecaprenyl diphosphate + H2O = di-trans,octa-cis-undecaprenyl phosphate + phosphate + H(+). Functionally, catalyzes the dephosphorylation of undecaprenyl diphosphate (UPP). Confers resistance to bacitracin. The polypeptide is Undecaprenyl-diphosphatase (Mycobacterium leprae (strain Br4923)).